Consider the following 871-residue polypeptide: Serrate RNA effector molecule homolog (871 aa).

Residues 1–90 (MGDSDDEYDR…RRDWDGHSSD (90 aa)) form a disordered region. Gly-2 is modified (N-acetylglycine). At Ser-4 the chain carries Phosphoserine. Tyr-8 carries the phosphotyrosine modification. Over residues 8 to 73 (YDRRRRDKFR…ERFSPPRHEL (66 aa)) the composition is skewed to basic and acidic residues. A phosphoserine mark is found at Ser-67, Ser-74, and Ser-136. A Glycyl lysine isopeptide (Lys-Gly) (interchain with G-Cter in SUMO2) cross-link involves residue Lys-150. The segment at 272–411 (EEEEQAGKPG…KPKDAAGLEC (140 aa)) is disordered. A compositionally biased stretch (basic and acidic residues) spans 297 to 347 (DGERKTNDKDEKKEDSKQAENDSSNDDKTKKSEGDGDKEEKKEDSEKEAKK). The segment covering 370-385 (SESESESGQAEEEKEE) has biased composition (acidic residues). Positions 386–411 (AEALKEKEKPKEEEWEKPKDAAGLEC) are enriched in basic and acidic residues. A phosphoserine mark is found at Ser-492 and Ser-539. At Thr-543 the chain carries Phosphothreonine. Residue Ser-569 is modified to Phosphoserine. The segment at 574–597 (ELLGSSGGAPPEEPPKEGNPAEIN) is disordered. Thr-670 bears the Phosphothreonine mark. Residue Ser-678 is modified to Phosphoserine. Omega-N-methylarginine occurs at positions 828, 835, and 845. The tract at residues 830–849 (NYDAFRGQGGYPGKPRNRMV) is disordered.

It belongs to the ARS2 family. In terms of assembly, interacts with CASP8AP2, ERBB4, NCBP1/CBP80 and DROSHA. Interacts with LUZP4. Interacts with NCBP2/CBP20 and NCBP3. Interacts with MTREX.

Its subcellular location is the nucleus. It localises to the nucleoplasm. The protein resides in the cytoplasm. In terms of biological role, acts as a mediator between the cap-binding complex (CBC) and the primary microRNAs (miRNAs) processing machinery during cell proliferation. Contributes to the stability and delivery of capped primary miRNA transcripts to the primary miRNA processing complex containing DGCR8 and DROSHA, thereby playing a role in RNA-mediated gene silencing (RNAi) by miRNAs. Binds capped RNAs (m7GpppG-capped RNA); however interaction is probably mediated via its interaction with NCBP1/CBP80 component of the CBC complex. Involved in cell cycle progression at S phase. Does not directly confer arsenite resistance but rather modulates arsenic sensitivity. Independently of its activity on miRNAs, necessary and sufficient to promote neural stem cell self-renewal. Does so by directly binding SOX2 promoter and positively regulating its transcription. This chain is Serrate RNA effector molecule homolog (SRRT), found in Pongo abelii (Sumatran orangutan).